A 64-amino-acid chain; its full sequence is Antimicrobial peptide THP2 (64 aa).

Residues methionine 1–methionine 28 form the signal peptide. Cystine bridges form between cysteine 31–cysteine 57, cysteine 36–cysteine 51, and cysteine 41–cysteine 58.

As to expression, expressed in circulating heterophil granulocytes and bone marrow (at protein level).

It localises to the secreted. Antibacterial activity against the Gram-positive bacterium Staphylococcus aureus. Lacks antibacterial activity against the Gram-negative bacterium E.coli K-12. The chain is Antimicrobial peptide THP2 from Meleagris gallopavo (Wild turkey).